We begin with the raw amino-acid sequence, 103 residues long: Phosphoribosyl-ATP pyrophosphatase (103 aa).

Belongs to the PRA-PH family.

It is found in the cytoplasm. The catalysed reaction is 1-(5-phospho-beta-D-ribosyl)-ATP + H2O = 1-(5-phospho-beta-D-ribosyl)-5'-AMP + diphosphate + H(+). It participates in amino-acid biosynthesis; L-histidine biosynthesis; L-histidine from 5-phospho-alpha-D-ribose 1-diphosphate: step 2/9. The chain is Phosphoribosyl-ATP pyrophosphatase from Cereibacter sphaeroides (strain ATCC 17029 / ATH 2.4.9) (Rhodobacter sphaeroides).